Reading from the N-terminus, the 304-residue chain is Pyridoxal 5'-phosphate synthase subunit pyroA (304 aa).

D28 provides a ligand contact to D-ribose 5-phosphate. K85 acts as the Schiff-base intermediate with D-ribose 5-phosphate in catalysis. G157 provides a ligand contact to D-ribose 5-phosphate. A D-glyceraldehyde 3-phosphate-binding site is contributed by R169. D-ribose 5-phosphate contacts are provided by residues G224 and 245-246; that span reads GS.

Belongs to the PdxS/SNZ family.

It carries out the reaction aldehydo-D-ribose 5-phosphate + D-glyceraldehyde 3-phosphate + L-glutamine = pyridoxal 5'-phosphate + L-glutamate + phosphate + 3 H2O + H(+). Its pathway is cofactor biosynthesis; pyridoxal 5'-phosphate biosynthesis. Catalyzes the formation of pyridoxal 5'-phosphate from ribose 5-phosphate (RBP), glyceraldehyde 3-phosphate (G3P) and ammonia. The ammonia is provided by PDX2. Can also use ribulose 5-phosphate and dihydroxyacetone phosphate as substrates, resulting from enzyme-catalyzed isomerization of RBP and G3P, respectively. Also plays an indirect role in resistance to singlet oxygen-generating photosensitizers. The polypeptide is Pyridoxal 5'-phosphate synthase subunit pyroA (pyroA) (Emericella nidulans (strain FGSC A4 / ATCC 38163 / CBS 112.46 / NRRL 194 / M139) (Aspergillus nidulans)).